The primary structure comprises 237 residues: Uridylate kinase (237 aa).

An ATP-binding site is contributed by 11-14 (KLSG). Gly53 serves as a coordination point for UMP. ATP is bound by residues Gly54 and Arg58. Residues Asp73 and 134–141 (TGNPFFTT) contribute to the UMP site. ATP contacts are provided by Thr161, Tyr167, and Asp170.

The protein belongs to the UMP kinase family. Homohexamer.

The protein localises to the cytoplasm. The catalysed reaction is UMP + ATP = UDP + ADP. It participates in pyrimidine metabolism; CTP biosynthesis via de novo pathway; UDP from UMP (UMPK route): step 1/1. With respect to regulation, inhibited by UTP. Its function is as follows. Catalyzes the reversible phosphorylation of UMP to UDP. The sequence is that of Uridylate kinase from Nitrosomonas eutropha (strain DSM 101675 / C91 / Nm57).